We begin with the raw amino-acid sequence, 753 residues long: Synaptotagmin-like protein 5 (753 aa).

One can recognise a RabBD domain in the interval 7 to 123; that stretch reads FINLSFLLDH…IISGEWFLEE (117 aa). An FYVE-type zinc finger spans residues 64–106; that stretch reads CVHCHKTLGLIFDRGDPCQACSLRVCSECRVTGLDGSWKCTVC. Disordered regions lie at residues 145 to 279, 297 to 359, and 380 to 404; these read RRSP…SREH, LTKS…LNSL, and LASG…VPDA. Serine 147 carries the phosphoserine modification. Residues 150–174 are compositionally biased toward polar residues; that stretch reads SEETQNQEQAQQCVDKSDTLSSVRQ. Residues 195–206 show a composition bias toward basic and acidic residues; it reads TRGEIRTPKPES. A compositionally biased stretch (polar residues) spans 214–223; sequence LDSQNLQSFK. Over residues 224-237 the composition is skewed to low complexity; it reads SASGSDRGSTTSSD. Over residues 249–275 the composition is skewed to polar residues; sequence KSSYSNGGIPVTQRSPVPSAHSVTSIN. Residues 380 to 391 show a composition bias toward polar residues; that stretch reads LASGLSTNSQAG. C2 domains are found at residues 429 to 550 and 597 to 717; these read VTGE…DEWF and KRGK…VDWM.

Binds RAB27A that has been activated by GTP-binding.

The protein localises to the membrane. In terms of biological role, may act as Rab effector protein and play a role in vesicle trafficking. Binds phospholipids. The protein is Synaptotagmin-like protein 5 (Sytl5) of Mus musculus (Mouse).